A 402-amino-acid polypeptide reads, in one-letter code: Multidrug resistance protein MdtH (402 aa).

Residues 1–12 (MSRVSQARNLGK) lie on the Cytoplasmic side of the membrane. The helical transmembrane segment at 13 to 33 (YFLLIDNMLVVLGFFVVFPLI) threads the bilayer. At 34–98 (SIRFVDQMGW…GFATMGIAHE (65 aa)) the chain is on the periplasmic side. Residues 99–116 (PWLLWFSCLLSGLGGTLF) traverse the membrane as a helical segment. Residues 117 to 138 (DPPRSALVVKLIRPQQRGRFFS) are Cytoplasmic-facing. The helical transmembrane segment at 139–159 (LLMMQDSAGAVIGALLGSWLL) threads the bilayer. At 160 to 164 (QYDFR) the chain is on the periplasmic side. Residues 165–185 (LVCATGAVLFVLCAAFNAWLL) traverse the membrane as a helical segment. Residues 186-213 (PAWKLSTVRTPVREGMTRVMRDKRFVTY) are Cytoplasmic-facing. Residues 214–234 (VLTLAGYYMLAVQVMLMLPIM) form a helical membrane-spanning segment. Residues 235–243 (VNDVAGAPS) lie on the Periplasmic side of the membrane. Residues 244 to 264 (AVKWMYAIEACLSLTLLYPIA) traverse the membrane as a helical segment. At 265–276 (RWSEKHFRLEHR) the chain is on the cytoplasmic side. A helical membrane pass occupies residues 277-297 (LMAGLLIMSLSMMPVGMVSGL). The Periplasmic portion of the chain corresponds to 298 to 299 (QQ). A helical transmembrane segment spans residues 300–320 (LFTLICLFYIGSIIAEPARET). Topologically, residues 321–339 (LSASLADARARGSYMGCSR) are cytoplasmic. Residues 340–360 (LGLAIGGAIGYIGGGWLFDLG) traverse the membrane as a helical segment. The Periplasmic segment spans residues 361 to 367 (KSAHQPE). Residues 368–388 (LPWMMLGIIGIFTFLALGWQF) traverse the membrane as a helical segment. The Cytoplasmic portion of the chain corresponds to 389–402 (SQKRAARRLLERDA).

It belongs to the major facilitator superfamily. DHA1 family. MdtH (TC 2.A.1.2.21) subfamily.

The protein resides in the cell inner membrane. Its function is as follows. Confers resistance to norfloxacin and enoxacin. This is Multidrug resistance protein MdtH from Escherichia coli (strain SE11).